We begin with the raw amino-acid sequence, 1596 residues long: Cellulose synthase 2 (1596 aa).

The tract at residues 1–749 (MIYRAILKRL…RSARHGATAS (749 aa)) is catalytic. A run of 2 helical transmembrane segments spans residues 25–45 (SPFV…GVTI) and 106–126 (LSLL…LSYF). Residues 145–238 (DWPVVDVYVP…YVVIFDCDHI (94 aa)) are catalytic subdomain A. Aspartate 187 is a catalytic residue. Substrate is bound by residues aspartate 234 and aspartate 236. Residues 315 to 375 (SAVLGIGGFA…GQRVRWARGM (61 aa)) form a catalytic subdomain B region. Aspartate 331 is an active-site residue. A run of 4 helical transmembrane segments spans residues 396–416 (LCYL…VFLA), 421–441 (FLFL…VYAF), 505–525 (FDLN…LALV), and 544–564 (FALN…SIAV). A PilZ domain is found at 570 to 669 (QIRHKPRVRA…ERQIVEFMFG (100 aa)). Positions 750–1596 (LIVLLGLPAA…RVKDTTDASH (847 aa)) are cyclic di-GMP binding domain. Disordered regions lie at residues 769–812 (SRAT…IAPA) and 828–868 (TGPA…APPI). The span at 783 to 809 (VEPPPVNAPPPPSLPQPPGTLPTPPQI) shows a compositional bias: pro residues. Residues 1553-1573 (LTLYVLGLVGAGLVAAAAVRL) form a helical membrane-spanning segment.

In the N-terminal section; belongs to the glycosyltransferase 2 family. This sequence in the C-terminal section; belongs to the AcsB/BcsB family.

The protein localises to the cell inner membrane. It catalyses the reaction [(1-&gt;4)-beta-D-glucosyl](n) + UDP-alpha-D-glucose = [(1-&gt;4)-beta-D-glucosyl](n+1) + UDP + H(+). This Novacetimonas hansenii (Komagataeibacter hansenii) protein is Cellulose synthase 2 (acsAII).